Consider the following 47-residue polypeptide: PhoP/PhoQ regulator MgrB (47 aa).

Residues 6-26 traverse the membrane as a helical segment; that stretch reads WVILIIVALVCLLLWAQVFNI.

It belongs to the MgrB family. As to quaternary structure, may form homooligomers. Probably interacts with the periplasmic domain of PhoQ.

It localises to the cell inner membrane. In terms of biological role, phoP-regulated transcription is redox-sensitive, being activated when the periplasm becomes more reducing. MgrB acts between DsbA/DsbB and PhoP/PhoQ in this pathway. Represses PhoP/PhoQ signaling, possibly by binding to the periplasmic domain of PhoQ, altering its activity and that of downstream effector PhoP. In Citrobacter koseri (strain ATCC BAA-895 / CDC 4225-83 / SGSC4696), this protein is PhoP/PhoQ regulator MgrB.